The primary structure comprises 581 residues: Arginine--tRNA ligase (581 aa).

Positions 131-141 (ANPTGPMHVGH) match the 'HIGH' region motif.

It belongs to the class-I aminoacyl-tRNA synthetase family. In terms of assembly, monomer.

It is found in the cytoplasm. It carries out the reaction tRNA(Arg) + L-arginine + ATP = L-arginyl-tRNA(Arg) + AMP + diphosphate. The chain is Arginine--tRNA ligase from Paracoccus denitrificans (strain Pd 1222).